The sequence spans 316 residues: CXXC-type zinc finger protein 5 (316 aa).

Residues 1–10 show a composition bias toward gly residues; it reads MSSLGGGSQD. A disordered region spans residues 1–95; it reads MSSLGGGSQD…SGGAGSMMGG (95 aa). Composition is skewed to low complexity over residues 11-27 and 36-50; these read AGGS…SGSG and SATV…VADD. The segment at 250–291 adopts a CXXC-type zinc-finger fold; sequence GKKKRKRCGMCAPCRRRINCEQCSSCRNRKTGHQICKFRKCE. Positions 251 to 256 match the Nuclear localization signal motif; that stretch reads KKKRKR. The Zn(2+) site is built by Cys257, Cys260, Cys263, Cys269, Cys272, Cys275, Cys285, and Cys290.

In terms of assembly, interacts with DVL1. Interacts with RBPJ. Expressed in neural stem cells (at protein level). Expressed in the dorsal telencephalon.

It localises to the nucleus. The protein localises to the cytoplasm. Functionally, may indirectly participate in activation of the NF-kappa-B and MAPK pathways. Required for DNA damage-induced ATM phosphorylation, p53 activation and cell cycle arrest. Involved in myelopoiesis. Acts as a mediator of BMP4-mediated modulation of canonical Wnt signaling activity in neural stem cells. Binds to the oxygen responsive element of COX4I2 and represses its transcription under hypoxia conditions (4% oxygen), as well as normoxia conditions (20% oxygen). May repress COX4I2 transactivation induced by CHCHD2 and RBPJ. Binds preferentially to DNA containing cytidine-phosphate-guanosine (CpG) dinucleotides over CpH (H=A, T, and C), hemimethylated-CpG and hemimethylated-hydroxymethyl-CpG. This is CXXC-type zinc finger protein 5 (Cxxc5) from Rattus norvegicus (Rat).